Reading from the N-terminus, the 179-residue chain is ATP synthase subunit b, chloroplastic (179 aa).

Residues 28-46 form a helical membrane-spanning segment; the sequence is IINIAALVGILIYAGRDFL.

Belongs to the ATPase B chain family. In terms of assembly, F-type ATPases have 2 components, F(1) - the catalytic core - and F(0) - the membrane proton channel. F(1) has five subunits: alpha(3), beta(3), gamma(1), delta(1), epsilon(1). F(0) has four main subunits: a(1), b(1), b'(1) and c(10-14). The alpha and beta chains form an alternating ring which encloses part of the gamma chain. F(1) is attached to F(0) by a central stalk formed by the gamma and epsilon chains, while a peripheral stalk is formed by the delta, b and b' chains.

The protein resides in the plastid. It localises to the chloroplast thylakoid membrane. Functionally, f(1)F(0) ATP synthase produces ATP from ADP in the presence of a proton or sodium gradient. F-type ATPases consist of two structural domains, F(1) containing the extramembraneous catalytic core and F(0) containing the membrane proton channel, linked together by a central stalk and a peripheral stalk. During catalysis, ATP synthesis in the catalytic domain of F(1) is coupled via a rotary mechanism of the central stalk subunits to proton translocation. Component of the F(0) channel, it forms part of the peripheral stalk, linking F(1) to F(0). The sequence is that of ATP synthase subunit b, chloroplastic from Trieres chinensis (Marine centric diatom).